Consider the following 87-residue polypeptide: Small ribosomal subunit protein uS19 (87 aa).

This sequence belongs to the universal ribosomal protein uS19 family.

In terms of biological role, protein S19 forms a complex with S13 that binds strongly to the 16S ribosomal RNA. The polypeptide is Small ribosomal subunit protein uS19 (rpsS) (Mycoplasma genitalium (strain ATCC 33530 / DSM 19775 / NCTC 10195 / G37) (Mycoplasmoides genitalium)).